Consider the following 280-residue polypeptide: Diaminopimelate epimerase (280 aa).

The substrate site is built by Asn11 and Asn62. The active-site Proton donor is Cys71. Substrate-binding positions include 72-73, Asn160, Asn193, and 211-212; these read GN and ER. The active-site Proton acceptor is the Cys220. 221 to 222 contributes to the substrate binding site; it reads GT.

It belongs to the diaminopimelate epimerase family. Homodimer.

The protein localises to the cytoplasm. It catalyses the reaction (2S,6S)-2,6-diaminopimelate = meso-2,6-diaminopimelate. It participates in amino-acid biosynthesis; L-lysine biosynthesis via DAP pathway; DL-2,6-diaminopimelate from LL-2,6-diaminopimelate: step 1/1. Catalyzes the stereoinversion of LL-2,6-diaminopimelate (L,L-DAP) to meso-diaminopimelate (meso-DAP), a precursor of L-lysine and an essential component of the bacterial peptidoglycan. The protein is Diaminopimelate epimerase of Acetivibrio thermocellus (strain ATCC 27405 / DSM 1237 / JCM 9322 / NBRC 103400 / NCIMB 10682 / NRRL B-4536 / VPI 7372) (Clostridium thermocellum).